A 263-amino-acid chain; its full sequence is Ribonuclease HII (263 aa).

An RNase H type-2 domain is found at 71–262 (QAIAGIDEVG…VKSMCCDSTN (192 aa)). A divalent metal cation contacts are provided by D77, E78, and D172.

It belongs to the RNase HII family. Mn(2+) is required as a cofactor. It depends on Mg(2+) as a cofactor.

It is found in the cytoplasm. The catalysed reaction is Endonucleolytic cleavage to 5'-phosphomonoester.. Functionally, endonuclease that specifically degrades the RNA of RNA-DNA hybrids. In Streptococcus pyogenes serotype M3 (strain ATCC BAA-595 / MGAS315), this protein is Ribonuclease HII.